Consider the following 92-residue polypeptide: Small ribosomal subunit protein uS19 (92 aa).

The protein belongs to the universal ribosomal protein uS19 family.

Its function is as follows. Protein S19 forms a complex with S13 that binds strongly to the 16S ribosomal RNA. This is Small ribosomal subunit protein uS19 from Mycoplasmopsis agalactiae (strain NCTC 10123 / CIP 59.7 / PG2) (Mycoplasma agalactiae).